We begin with the raw amino-acid sequence, 975 residues long: Nesprin-3 (975 aa).

Topologically, residues Met1–Cys925 are cytoplasmic. A Spectrin 1 repeat occupies Arg220–Gly325. Positions Asn617 to Gln645 form a coiled coil. The Spectrin 2 repeat unit spans residues Val647 to Leu740. One can recognise a KASH domain in the interval Gly917–Thr975. A helical; Anchor for type IV membrane protein membrane pass occupies residues Val926 to Ile946. At Arg947–Thr975 the chain is on the perinuclear space side.

The protein belongs to the nesprin family. Core component of LINC complexes which are composed of inner nuclear membrane SUN domain-containing proteins coupled to outer nuclear membrane KASH domain-containing nesprins. SUN and KASH domain-containing proteins seem to bind each other promiscuously; however, differentially expression of LINC complex constituents can give rise to specific assemblies. Interacts with SUN1 and SUN2; probably forming respective LINC complexes. Interacts with PLEC (via actin-binding domain). Interacts with DST. Interacts with SYNE1 via spectrin repeats. Interacts (via KASH domain) with TOR1A (ATP-bound); the interaction is required for SYNE3 nuclear envelope localization. The disulfid bond with SUN1 or SUN2 is required for stability of the respective LINC complex under tensile forces. As to expression, expressed in aortic endothelial cells (at protein level).

The protein resides in the nucleus outer membrane. It localises to the nucleus envelope. Its subcellular location is the rough endoplasmic reticulum. Functionally, as a component of the LINC (LInker of Nucleoskeleton and Cytoskeleton) complex involved in the connection between the nuclear lamina and the cytoskeleton. The nucleocytoplasmic interactions established by the LINC complex play an important role in the transmission of mechanical forces across the nuclear envelope and in nuclear movement and positioning. Probable anchoring protein which tethers the nucleus to the cytoskeleton by binding PLEC which can associate with the intermediate filament system. Plays a role in the regulation of aortic epithelial cell morphology, and is required for flow-induced centrosome polarization and directional migration in aortic endothelial cells. This Homo sapiens (Human) protein is Nesprin-3.